Consider the following 199-residue polypeptide: Single-stranded DNA cytosine deaminase (199 aa).

The Bipartite nuclear localization signal motif lies at 1 to 30 (MDSLLKKQRQFLYQFKNVRWAKGRHETYLC). An interaction with SUPT6H region spans residues 2 to 26 (DSLLKKQRQFLYQFKNVRWAKGRHE). Residues 23–130 (GRHETYLCYV…KAEPEGLRRL (108 aa)) form the CMP/dCMP-type deaminase domain. Thr-27 bears the Phosphothreonine; by PKA mark. Residue Ser-38 is modified to Phosphoserine; by PKA. Residues 39-42 (PTSF) form an important for interaction with CTNNBL1 region. His-56 lines the Zn(2+) pocket. Glu-58 serves as the catalytic Proton donor. Residues Cys-87 and Cys-90 each contribute to the Zn(2+) site. The tract at residues 88-116 (YDCARHVADFLRGYPNLSLRIFTARLYFC) is required for interaction with RNF126. Residues 184–199 (LYEVDDLRDAFRTLGL) carry the Nuclear export signal motif.

It belongs to the cytidine and deoxycytidylate deaminase family. In terms of assembly, interacts with CTNNBL1; the interaction is important for the immunoglobulin switch activity of AICDA. Interacts (via its NLS) with KPNA1. Interacts with PKA/PRKACA and PRKAR1A/PKR1. Interacts with SUPT6H, TRIM28 and NCL. Directly interacts with MCM3AP; this interaction may favor AICDA recruitment to immunoglobulin variable region genes, hence promoting somatic hypermutations. It depends on Zn(2+) as a cofactor. In terms of processing, ser-38 is the major site whereas Thr-27 is the minor site of phosphorylation. Phosphorylation regulates its class-switch recombination activity. Post-translationally, probably monoubiquitinated on several residues by RNF126. Expressed in lymph nodes, spleen and thymus.

The protein resides in the nucleus. The protein localises to the cytoplasm. The catalysed reaction is a 2'-deoxycytidine in single-stranded DNA + H2O + H(+) = a 2'-deoxyuridine in single-stranded DNA + NH4(+). Its function is as follows. Single-stranded DNA-specific cytidine deaminase. Involved in somatic hypermutation (SHM), gene conversion, and class-switch recombination (CSR) in B-lymphocytes by deaminating C to U during transcription of Ig-variable (V) and Ig-switch (S) region DNA. Required for several crucial steps of B-cell terminal differentiation necessary for efficient antibody responses. May also play a role in the epigenetic regulation of gene expression by participating in DNA demethylation. The protein is Single-stranded DNA cytosine deaminase (AICDA) of Bos taurus (Bovine).